We begin with the raw amino-acid sequence, 602 residues long: Potassium voltage-gated channel subfamily A member 5 (602 aa).

The segment at 1-202 is tetramerization domain; sequence MEISLVPLEN…FYQLGDEAME (202 aa). Topologically, residues 1 to 238 are cytoplasmic; the sequence is MEISLVPLEN…LIFEYPESSG (238 aa). The disordered stretch occupies residues 58 to 107; sequence EDANQGGRPLPPMAQELPQPRRLSAEDEEGEGDPGLGTVEEDQAPQDAGS. Ser-81 bears the Phosphoserine; by CK2 and PKA mark. Lys-212 participates in a covalent cross-link: Glycyl lysine isopeptide (Lys-Gly) (interchain with G-Cter in SUMO). The helical transmembrane segment at 239–260 threads the bilayer; the sequence is SARAIAIVSVLVILISIITFCL. At 261 to 314 the chain is on the extracellular side; sequence ETLPEFRDERELLRHPPVPPQPPAPAPGINGSVSGALSSGPTVAPLLPRTLADP. The helical transmembrane segment at 315-336 threads the bilayer; it reads FFIVETTCVIWFTFELLVRFFA. Residue Cys-337 is the site of S-palmitoyl cysteine attachment. Over 337–347 the chain is Cytoplasmic; it reads CPSKAEFSRNI. Residues 348–368 form a helical membrane-spanning segment; the sequence is MNIIDVVAIFPYFITLGTELA. The Extracellular segment spans residues 369–384; the sequence is EQQPGGGGQNGQQAMS. The helical; Voltage-sensor transmembrane segment at 385 to 405 threads the bilayer; the sequence is LAILRVIRLVRVFRIFKLSRH. Residues 406–420 are Cytoplasmic-facing; sequence SKGLQILGKTLQASM. Positions 407–420 are S4-S5 linker; that stretch reads KGLQILGKTLQASM. Residues 421–442 form a helical membrane-spanning segment; sequence RELGLLIFFLFIGVILFSSAVY. Topologically, residues 443–456 are extracellular; it reads FAEADNHGSHFSSI. The helical intramembrane region spans 457–468; it reads PDAFWWAVVTMT. A Selectivity filter motif is present at residues 469–474; sequence TVGYGD. Residues 469-476 lie within the membrane without spanning it; that stretch reads TVGYGDMR. The Extracellular segment spans residues 477 to 483; the sequence is PITVGGK. The helical transmembrane segment at 484–512 threads the bilayer; it reads IVGSLCAIAGVLTIALPVPVIVSNFNYFY. Topologically, residues 513-602 are cytoplasmic; sequence HRETDHEEQA…CLDTSRETDL (90 aa). A compositionally biased stretch (basic and acidic residues) spans 523 to 536; sequence ALKEEQGNQRRESG. Positions 523 to 543 are disordered; the sequence is ALKEEQGNQRRESGLDTGGQR. Residue Lys-525 forms a Glycyl lysine isopeptide (Lys-Gly) (interchain with G-Cter in SUMO) linkage. 3 positions are modified to phosphoserine; by PKA: Ser-535, Ser-546, and Ser-569. A PDZ-binding motif is present at residues 600-602; it reads TDL.

This sequence belongs to the potassium channel family. A (Shaker) (TC 1.A.1.2) subfamily. Kv1.5/KCNA5 sub-subfamily. As to quaternary structure, homotetramer and heterotetramer of potassium channel proteins. Interacts with DLG1, which enhances channel currents. Forms a ternary complex with DLG1 and CAV3. Interacts with KCNAB1. Interacts with UBE2I. Interacts with XIRP2; the interaction is required for normal action potential configuration in the heart. Glycosylated. In terms of processing, sumoylated on Lys-212, and Lys-525, preferentially with SUMO3. Sumoylation regulates the voltage sensitivity of the channel. Expressed equally in atrium, ventricle, aorta and skeletal muscle. Weaker expression in brain.

It is found in the cell membrane. The enzyme catalyses K(+)(in) = K(+)(out). Voltage-gated potassium channel that mediates transmembrane potassium transport in excitable membranes. Forms tetrameric potassium-selective channels through which potassium ions pass in accordance with their electrochemical gradient. The channel alternates between opened and closed conformations in response to the voltage difference across the membrane. Can form functional homotetrameric channels and heterotetrameric channels that contain variable proportions of KCNA1, KCNA2, KCNA4, KCNA5, and possibly other family members as well; channel properties depend on the type of alpha subunits that are part of the channel. Channel properties are modulated by cytoplasmic beta subunits that regulate the subcellular location of the alpha subunits and promote rapid inactivation. Homotetrameric channels display rapid activation and slow inactivation. Required for normal electrical conduction including formation of the infranodal ventricular conduction system and normal action potential configuration, as a result of its interaction with XIRP2. May play a role in regulating the secretion of insulin in normal pancreatic islets. This chain is Potassium voltage-gated channel subfamily A member 5 (Kcna5), found in Rattus norvegicus (Rat).